Consider the following 166-residue polypeptide: Regulatory protein RecX (166 aa).

Belongs to the RecX family.

The protein resides in the cytoplasm. Functionally, modulates RecA activity. This is Regulatory protein RecX from Shigella boydii serotype 4 (strain Sb227).